A 467-amino-acid polypeptide reads, in one-letter code: Glycosyl hydrolase family 109 protein (467 aa).

Positions 1-31 (MKNFNRRAFLKAAGATTAGLVTSGLILPASA) form a signal peptide, tat-type signal. Residues 66-67 (QR), D88, 137-140 (WQWH), 157-158 (EV), and N186 contribute to the NAD(+) site. Substrate is bound by residues Y215, R234, 246–249 (YPTH), and Y328. An NAD(+)-binding site is contributed by Y246.

Belongs to the Gfo/Idh/MocA family. Glycosyl hydrolase 109 subfamily. The cofactor is NAD(+). Post-translationally, predicted to be exported by the Tat system. The position of the signal peptide cleavage has not been experimentally proven.

In terms of biological role, glycosidase. This is Glycosyl hydrolase family 109 protein from Shewanella woodyi (strain ATCC 51908 / MS32).